The chain runs to 331 residues: Ketol-acid reductoisomerase (NADP(+)) (331 aa).

Residues 2–182 form the KARI N-terminal Rossmann domain; it reads ARMYYDEDGN…GGTRAGILET (181 aa). NADP(+)-binding positions include 25–28, Ser51, Ser53, and 83–86; these read YGSQ and DEVQ. The active site involves His108. Gly134 is an NADP(+) binding site. A KARI C-terminal knotted domain is found at 183 to 328; it reads SFREETETDL…KDLRAMFSWL (146 aa). Mg(2+)-binding residues include Asp191, Glu195, Glu227, and Glu231. Ser252 is a binding site for substrate.

It belongs to the ketol-acid reductoisomerase family. Requires Mg(2+) as cofactor.

The enzyme catalyses (2R)-2,3-dihydroxy-3-methylbutanoate + NADP(+) = (2S)-2-acetolactate + NADPH + H(+). The catalysed reaction is (2R,3R)-2,3-dihydroxy-3-methylpentanoate + NADP(+) = (S)-2-ethyl-2-hydroxy-3-oxobutanoate + NADPH + H(+). Its pathway is amino-acid biosynthesis; L-isoleucine biosynthesis; L-isoleucine from 2-oxobutanoate: step 2/4. The protein operates within amino-acid biosynthesis; L-valine biosynthesis; L-valine from pyruvate: step 2/4. In terms of biological role, involved in the biosynthesis of branched-chain amino acids (BCAA). Catalyzes an alkyl-migration followed by a ketol-acid reduction of (S)-2-acetolactate (S2AL) to yield (R)-2,3-dihydroxy-isovalerate. In the isomerase reaction, S2AL is rearranged via a Mg-dependent methyl migration to produce 3-hydroxy-3-methyl-2-ketobutyrate (HMKB). In the reductase reaction, this 2-ketoacid undergoes a metal-dependent reduction by NADPH to yield (R)-2,3-dihydroxy-isovalerate. In Gloeothece citriformis (strain PCC 7424) (Cyanothece sp. (strain PCC 7424)), this protein is Ketol-acid reductoisomerase (NADP(+)).